We begin with the raw amino-acid sequence, 334 residues long: Probable allantoicase (334 aa).

This sequence belongs to the allantoicase family.

It catalyses the reaction allantoate + H2O = (S)-ureidoglycolate + urea. It participates in nitrogen metabolism; (S)-allantoin degradation; (S)-ureidoglycolate from allantoate (aminidohydrolase route): step 1/1. The chain is Probable allantoicase from Acinetobacter baylyi (strain ATCC 33305 / BD413 / ADP1).